The following is a 38-amino-acid chain: Cytochrome b6-f complex subunit 5 (38 aa).

Residues 5–25 (LVLGLVMGLVPITLAGLFVAA) traverse the membrane as a helical segment.

This sequence belongs to the PetG family. As to quaternary structure, the 4 large subunits of the cytochrome b6-f complex are cytochrome b6, subunit IV (17 kDa polypeptide, PetD), cytochrome f and the Rieske protein, while the 4 small subunits are PetG, PetL, PetM and PetN. The complex functions as a dimer.

Its subcellular location is the cellular thylakoid membrane. Its function is as follows. Component of the cytochrome b6-f complex, which mediates electron transfer between photosystem II (PSII) and photosystem I (PSI), cyclic electron flow around PSI, and state transitions. PetG is required for either the stability or assembly of the cytochrome b6-f complex. The protein is Cytochrome b6-f complex subunit 5 of Gloeothece citriformis (strain PCC 7424) (Cyanothece sp. (strain PCC 7424)).